A 374-amino-acid polypeptide reads, in one-letter code: Transaldolase (374 aa).

Residue Lys-140 is the Schiff-base intermediate with substrate of the active site.

The protein belongs to the transaldolase family. Type 2 subfamily.

The protein localises to the cytoplasm. The catalysed reaction is D-sedoheptulose 7-phosphate + D-glyceraldehyde 3-phosphate = D-erythrose 4-phosphate + beta-D-fructose 6-phosphate. It functions in the pathway carbohydrate degradation; pentose phosphate pathway; D-glyceraldehyde 3-phosphate and beta-D-fructose 6-phosphate from D-ribose 5-phosphate and D-xylulose 5-phosphate (non-oxidative stage): step 2/3. Functionally, transaldolase is important for the balance of metabolites in the pentose-phosphate pathway. This is Transaldolase from Renibacterium salmoninarum (strain ATCC 33209 / DSM 20767 / JCM 11484 / NBRC 15589 / NCIMB 2235).